A 428-amino-acid polypeptide reads, in one-letter code: Serine--tRNA ligase (428 aa).

231-233 (TAE) is a binding site for L-serine. ATP is bound at residue 262–264 (RSE). Residue Glu285 participates in L-serine binding. An ATP-binding site is contributed by 349 to 352 (EISS). An L-serine-binding site is contributed by Ser385.

It belongs to the class-II aminoacyl-tRNA synthetase family. Type-1 seryl-tRNA synthetase subfamily. In terms of assembly, homodimer. The tRNA molecule binds across the dimer.

It localises to the cytoplasm. It carries out the reaction tRNA(Ser) + L-serine + ATP = L-seryl-tRNA(Ser) + AMP + diphosphate + H(+). The enzyme catalyses tRNA(Sec) + L-serine + ATP = L-seryl-tRNA(Sec) + AMP + diphosphate + H(+). It participates in aminoacyl-tRNA biosynthesis; selenocysteinyl-tRNA(Sec) biosynthesis; L-seryl-tRNA(Sec) from L-serine and tRNA(Sec): step 1/1. Functionally, catalyzes the attachment of serine to tRNA(Ser). Is also able to aminoacylate tRNA(Sec) with serine, to form the misacylated tRNA L-seryl-tRNA(Sec), which will be further converted into selenocysteinyl-tRNA(Sec). This chain is Serine--tRNA ligase, found in Staphylococcus aureus (strain Mu3 / ATCC 700698).